The chain runs to 143 residues: Small ribosomal subunit protein uS12 (143 aa).

This sequence belongs to the universal ribosomal protein uS12 family. In terms of assembly, component of the 40S small ribosomal subunit.

It localises to the cytoplasm. The protein localises to the cytosol. It is found in the rough endoplasmic reticulum. In Gillichthys mirabilis (Long-jawed mudsucker), this protein is Small ribosomal subunit protein uS12 (rps23).